We begin with the raw amino-acid sequence, 321 residues long: 4-hydroxy-3-methylbut-2-enyl diphosphate reductase (321 aa).

A [4Fe-4S] cluster-binding site is contributed by Cys13. (2E)-4-hydroxy-3-methylbut-2-enyl diphosphate is bound by residues His41 and His75. Dimethylallyl diphosphate contacts are provided by His41 and His75. Residues His41 and His75 each coordinate isopentenyl diphosphate. Cys97 serves as a coordination point for [4Fe-4S] cluster. Position 125 (His125) interacts with (2E)-4-hydroxy-3-methylbut-2-enyl diphosphate. Residue His125 participates in dimethylallyl diphosphate binding. His125 contributes to the isopentenyl diphosphate binding site. The active-site Proton donor is Glu127. Thr168 provides a ligand contact to (2E)-4-hydroxy-3-methylbut-2-enyl diphosphate. Cys225 is a binding site for [4Fe-4S] cluster. Residues Ser253, Ser254, Asn255, and Ser302 each coordinate (2E)-4-hydroxy-3-methylbut-2-enyl diphosphate. Residues Ser253, Ser254, Asn255, and Ser302 each coordinate dimethylallyl diphosphate. 4 residues coordinate isopentenyl diphosphate: Ser253, Ser254, Asn255, and Ser302.

The protein belongs to the IspH family. [4Fe-4S] cluster is required as a cofactor.

It catalyses the reaction isopentenyl diphosphate + 2 oxidized [2Fe-2S]-[ferredoxin] + H2O = (2E)-4-hydroxy-3-methylbut-2-enyl diphosphate + 2 reduced [2Fe-2S]-[ferredoxin] + 2 H(+). The catalysed reaction is dimethylallyl diphosphate + 2 oxidized [2Fe-2S]-[ferredoxin] + H2O = (2E)-4-hydroxy-3-methylbut-2-enyl diphosphate + 2 reduced [2Fe-2S]-[ferredoxin] + 2 H(+). It participates in isoprenoid biosynthesis; dimethylallyl diphosphate biosynthesis; dimethylallyl diphosphate from (2E)-4-hydroxy-3-methylbutenyl diphosphate: step 1/1. Its pathway is isoprenoid biosynthesis; isopentenyl diphosphate biosynthesis via DXP pathway; isopentenyl diphosphate from 1-deoxy-D-xylulose 5-phosphate: step 6/6. Functionally, catalyzes the conversion of 1-hydroxy-2-methyl-2-(E)-butenyl 4-diphosphate (HMBPP) into a mixture of isopentenyl diphosphate (IPP) and dimethylallyl diphosphate (DMAPP). Acts in the terminal step of the DOXP/MEP pathway for isoprenoid precursor biosynthesis. This is 4-hydroxy-3-methylbut-2-enyl diphosphate reductase from Pelodictyon phaeoclathratiforme (strain DSM 5477 / BU-1).